Consider the following 576-residue polypeptide: Proline--tRNA ligase (576 aa).

Belongs to the class-II aminoacyl-tRNA synthetase family. ProS type 1 subfamily. As to quaternary structure, homodimer.

It is found in the cytoplasm. The catalysed reaction is tRNA(Pro) + L-proline + ATP = L-prolyl-tRNA(Pro) + AMP + diphosphate. Its function is as follows. Catalyzes the attachment of proline to tRNA(Pro) in a two-step reaction: proline is first activated by ATP to form Pro-AMP and then transferred to the acceptor end of tRNA(Pro). As ProRS can inadvertently accommodate and process non-cognate amino acids such as alanine and cysteine, to avoid such errors it has two additional distinct editing activities against alanine. One activity is designated as 'pretransfer' editing and involves the tRNA(Pro)-independent hydrolysis of activated Ala-AMP. The other activity is designated 'posttransfer' editing and involves deacylation of mischarged Ala-tRNA(Pro). The misacylated Cys-tRNA(Pro) is not edited by ProRS. This Bordetella petrii (strain ATCC BAA-461 / DSM 12804 / CCUG 43448) protein is Proline--tRNA ligase.